A 159-amino-acid polypeptide reads, in one-letter code: uncharacterized protein (159 aa).

The disordered stretch occupies residues 1 to 139; the sequence is MSRRAPGSRL…RKSQERSMSY (139 aa). A compositionally biased stretch (polar residues) spans 9 to 31; that stretch reads RLSSGGTNYSRSWNDWQPRTDSA. Positions 65–82 are enriched in basic and acidic residues; the sequence is QRHDDTRVHADIQNDEKG. Over residues 105–119 the composition is skewed to polar residues; that stretch reads RVNNVTSPEFTSVQH. Residues 125 to 134 are compositionally biased toward basic and acidic residues; that stretch reads ATKDMRKSQE.

This is an uncharacterized protein from Homo sapiens (Human).